A 318-amino-acid chain; its full sequence is 4-hydroxy-3-methylbut-2-enyl diphosphate reductase (318 aa).

Cysteine 12 contributes to the [4Fe-4S] cluster binding site. Positions 41 and 74 each coordinate (2E)-4-hydroxy-3-methylbut-2-enyl diphosphate. Dimethylallyl diphosphate is bound by residues histidine 41 and histidine 74. Positions 41 and 74 each coordinate isopentenyl diphosphate. Residue cysteine 96 participates in [4Fe-4S] cluster binding. (2E)-4-hydroxy-3-methylbut-2-enyl diphosphate is bound at residue histidine 124. Histidine 124 provides a ligand contact to dimethylallyl diphosphate. Isopentenyl diphosphate is bound at residue histidine 124. Glutamate 126 functions as the Proton donor in the catalytic mechanism. Threonine 168 lines the (2E)-4-hydroxy-3-methylbut-2-enyl diphosphate pocket. Cysteine 198 provides a ligand contact to [4Fe-4S] cluster. (2E)-4-hydroxy-3-methylbut-2-enyl diphosphate-binding residues include serine 226, serine 227, asparagine 228, and serine 270. Residues serine 226, serine 227, asparagine 228, and serine 270 each coordinate dimethylallyl diphosphate. Residues serine 226, serine 227, asparagine 228, and serine 270 each contribute to the isopentenyl diphosphate site.

The protein belongs to the IspH family. It depends on [4Fe-4S] cluster as a cofactor.

The catalysed reaction is isopentenyl diphosphate + 2 oxidized [2Fe-2S]-[ferredoxin] + H2O = (2E)-4-hydroxy-3-methylbut-2-enyl diphosphate + 2 reduced [2Fe-2S]-[ferredoxin] + 2 H(+). It carries out the reaction dimethylallyl diphosphate + 2 oxidized [2Fe-2S]-[ferredoxin] + H2O = (2E)-4-hydroxy-3-methylbut-2-enyl diphosphate + 2 reduced [2Fe-2S]-[ferredoxin] + 2 H(+). Its pathway is isoprenoid biosynthesis; dimethylallyl diphosphate biosynthesis; dimethylallyl diphosphate from (2E)-4-hydroxy-3-methylbutenyl diphosphate: step 1/1. It functions in the pathway isoprenoid biosynthesis; isopentenyl diphosphate biosynthesis via DXP pathway; isopentenyl diphosphate from 1-deoxy-D-xylulose 5-phosphate: step 6/6. In terms of biological role, catalyzes the conversion of 1-hydroxy-2-methyl-2-(E)-butenyl 4-diphosphate (HMBPP) into a mixture of isopentenyl diphosphate (IPP) and dimethylallyl diphosphate (DMAPP). Acts in the terminal step of the DOXP/MEP pathway for isoprenoid precursor biosynthesis. The polypeptide is 4-hydroxy-3-methylbut-2-enyl diphosphate reductase (Psychrobacter arcticus (strain DSM 17307 / VKM B-2377 / 273-4)).